Consider the following 149-residue polypeptide: Large ribosomal subunit protein uL15 (149 aa).

Residues 8–49 form a disordered region; the sequence is HDLRPAAGSNKPKTRVGRGEASKGKTAGRGTKGTGARKQVPA. Residues 31–45 are compositionally biased toward low complexity; sequence GKTAGRGTKGTGARK.

Belongs to the universal ribosomal protein uL15 family. Part of the 50S ribosomal subunit.

Its function is as follows. Binds to the 23S rRNA. In Corynebacterium aurimucosum (strain ATCC 700975 / DSM 44827 / CIP 107346 / CN-1) (Corynebacterium nigricans), this protein is Large ribosomal subunit protein uL15.